Consider the following 617-residue polypeptide: Sodium-coupled monocarboxylate transporter 2 (617 aa).

The Extracellular portion of the chain corresponds to 1–5 (MEVKN). Residues 6–26 (FAVWDYVVFAALFIISSGIGV) form a helical membrane-spanning segment. Residues 27-47 (FYAIKERKKATSREFLVGGRQ) lie on the Cytoplasmic side of the membrane. Residues 48-68 (MSFGPVALSLTASFMSAVTVL) form a helical membrane-spanning segment. Residues 69-80 (GTPADVYRFGAS) are Extracellular-facing. Residues 81 to 101 (FVLFFITYGLVIILTSELFLP) traverse the membrane as a helical segment. At 102-128 (VFYRSGITSTYEYLQLRFNKPVRYAAT) the chain is on the cytoplasmic side. A helical transmembrane segment spans residues 129-149 (VIYIVQTILYTGVVVYAPALA). Over 150-157 (LNQVTGFD) the chain is Extracellular. A helical transmembrane segment spans residues 158–178 (LWGSVFATGIVCTFYCTLGGL). Residues 179–180 (KA) are Cytoplasmic-facing. Residues 181 to 201 (VVWTDAFQMVVMIVGFLTVLI) form a helical membrane-spanning segment. Over 202-235 (QGSTYAGGLHNVLEQAENGSRLNIFDFDIDPLRR) the chain is Extracellular. N-linked (GlcNAc...) asparagine glycosylation is present at Asn-219. A helical membrane pass occupies residues 236–256 (HTFWTISVGGTFTWLGIYGVN). The Cytoplasmic segment spans residues 257–273 (QSTIQRCISCKTEKHAK). A helical membrane pass occupies residues 274–294 (LALYFNLLGLWIILLCAVFSG). The Extracellular segment spans residues 295 to 334 (LTMYAHFKDCDPWTSGIISAPDQLMPYFVMELFSTMPGLP). A helical membrane pass occupies residues 335–357 (GLFVACAFSGTLSTVAASINALA). Topologically, residues 358–385 (TVTFEDFVKSCFPRLSDKLSTWISKGLC) are cytoplasmic. The helical transmembrane segment at 386 to 406 (LLFGVICTSTAVAASLMGGVI) threads the bilayer. The Extracellular segment spans residues 407–411 (QAALS). A helical membrane pass occupies residues 412–432 (IHGMCGGPMLGLFSLGILFPF). The Cytoplasmic segment spans residues 433–437 (VNWKG). The chain crosses the membrane as a helical span at residues 438–458 (ALAGLLTGILLSFWVAIGAFI). The Extracellular segment spans residues 459-507 (YPAPASKTWPLPLSTDQCGLSNVTESVPPVLSSRPAIAETWYALSYLHY). Asn-480 is a glycosylation site (N-linked (GlcNAc...) asparagine). The chain crosses the membrane as a helical span at residues 508 to 528 (STVGCLGCIAAGVIISFLTGL). Over 529–617 (QKGKDIPPLL…NMALEKITHF (89 aa)) the chain is Cytoplasmic.

This sequence belongs to the sodium:solute symporter (SSF) (TC 2.A.21) family.

It localises to the apical cell membrane. The enzyme catalyses (S)-lactate(out) + Na(+)(out) = (S)-lactate(in) + Na(+)(in). The catalysed reaction is nicotinate(out) + Na(+)(out) = nicotinate(in) + Na(+)(in). It catalyses the reaction pyruvate(out) + Na(+)(out) = pyruvate(in) + Na(+)(in). It carries out the reaction propanoate(out) + Na(+)(out) = propanoate(in) + Na(+)(in). The enzyme catalyses butanoate(out) + Na(+)(out) = butanoate(in) + Na(+)(in). The catalysed reaction is acetoacetate(out) + Na(+)(out) = acetoacetate(in) + Na(+)(in). In terms of biological role, acts as an electroneutral and low-affinity sodium (Na(+))-dependent sodium-coupled solute transporter. Catalyzes the transport across the plasma membrane of many monocarboxylates such as lactate, pyruvate, nicotinate, propionate, butyrate and beta-D-hydroxybutyrate. May be responsible for the first step of reabsorption of monocarboxylates from the lumen of the proximal tubule of the kidney and the small intestine. May play also a role in monocarboxylates transport in the retina. Mediates electroneutral uptake of lactate, with a stoichiometry of 2 Na(+) for each lactate. The sequence is that of Sodium-coupled monocarboxylate transporter 2 (SLC5A12) from Bos taurus (Bovine).